Here is a 360-residue protein sequence, read N- to C-terminus: Probable cinnamyl alcohol dehydrogenase 6 (360 aa).

Zn(2+) is bound at residue C48. Position 50 (T50) interacts with NADP(+). Positions 70, 71, 101, 104, 107, 115, and 164 each coordinate Zn(2+). NADP(+) is bound by residues T168, 192–197 (GLGGLG), 215–220 (STSPAK), T255, G279, and 302–304 (SMT).

This sequence belongs to the zinc-containing alcohol dehydrogenase family. Homodimer. Requires Zn(2+) as cofactor.

The catalysed reaction is (E)-cinnamyl alcohol + NADP(+) = (E)-cinnamaldehyde + NADPH + H(+). It carries out the reaction (E)-coniferol + NADP(+) = (E)-coniferaldehyde + NADPH + H(+). It catalyses the reaction (E)-sinapyl alcohol + NADP(+) = (E)-sinapaldehyde + NADPH + H(+). The enzyme catalyses (E)-4-coumaroyl alcohol + NADP(+) = (E)-4-coumaraldehyde + NADPH + H(+). The catalysed reaction is (E)-caffeyl alcohol + NADP(+) = (E)-caffeyl aldehyde + NADPH + H(+). It participates in aromatic compound metabolism; phenylpropanoid biosynthesis. In terms of biological role, involved in lignin biosynthesis. Catalyzes the final step specific for the production of lignin monomers. Catalyzes the NADPH-dependent reduction of coniferaldehyde, 5-hydroxyconiferaldehyde, sinapaldehyde, 4-coumaraldehyde and caffeyl aldehyde to their respective alcohols. The sequence is that of Probable cinnamyl alcohol dehydrogenase 6 from Oryza sativa subsp. japonica (Rice).